The following is a 217-amino-acid chain: Somatotropin (217 aa).

The N-terminal stretch at 1 to 24 (MAAGSWTSLLLAFTLLCLPQLREA) is a signal peptide. His-44 contributes to the Zn(2+) binding site. A disulfide bridge links Cys-79 with Cys-191. A Phosphoserine modification is found at Ser-132. Glu-200 provides a ligand contact to Zn(2+). Residues Cys-208 and Cys-215 are joined by a disulfide bond.

Belongs to the somatotropin/prolactin family.

Its subcellular location is the secreted. Its function is as follows. Plays an important role in growth control. Its major role in stimulating body growth is to stimulate the liver and other tissues to secrete IGF1. It stimulates both the differentiation and proliferation of myoblasts. It also stimulates amino acid uptake and protein synthesis in muscle and other tissues. The chain is Somatotropin (GH1) from Callithrix jacchus (White-tufted-ear marmoset).